We begin with the raw amino-acid sequence, 367 residues long: Peroxidase 1 (367 aa).

The signal sequence occupies residues 1–33 (MAKESKLTAGVAAALTVVAACALCLLLPATARA). Glutamine 34 carries the pyrrolidone carboxylic acid modification. 4 disulfide bridges follow: cysteine 44/cysteine 125, cysteine 77/cysteine 82, cysteine 131/cysteine 335, and cysteine 209/cysteine 244. The Proton acceptor role is filled by histidine 75. 5 residues coordinate Ca(2+): aspartate 76, valine 79, glycine 81, aspartate 83, and serine 85. A glycan (N-linked (GlcNAc...) asparagine) is linked at asparagine 164. Proline 172 contacts substrate. Histidine 202 is a heme b binding site. Threonine 203 provides a ligand contact to Ca(2+). Residues asparagine 218 and asparagine 247 are each glycosylated (N-linked (GlcNAc...) asparagine). Aspartate 259, threonine 262, and aspartate 267 together coordinate Ca(2+). Asparagine 303 carries N-linked (GlcNAc...) asparagine glycosylation.

The protein belongs to the peroxidase family. Classical plant (class III) peroxidase subfamily. Requires heme b as cofactor. Ca(2+) serves as cofactor. As to expression, expressed in the root tip meristems.

The protein resides in the secreted. The protein localises to the vacuole. It carries out the reaction 2 a phenolic donor + H2O2 = 2 a phenolic radical donor + 2 H2O. Functionally, removal of H(2)O(2), oxidation of toxic reductants, biosynthesis and degradation of lignin, suberization, auxin catabolism, response to environmental stresses such as wounding, pathogen attack and oxidative stress. These functions might be dependent on each isozyme/isoform in each plant tissue. This chain is Peroxidase 1 (PER1), found in Zea mays (Maize).